Here is a 464-residue protein sequence, read N- to C-terminus: Arginine biosynthesis bifunctional protein ArgJ, mitochondrial (464 aa).

Substrate is bound by residues Thr191, Lys220, Thr231, Glu318, Asn459, and Thr464. The active-site Nucleophile is the Thr231.

The protein belongs to the ArgJ family. As to quaternary structure, heterodimer of an alpha and a beta chain. The alpha and beta chains are autoproteolytically processed from a single precursor protein within the mitochondrion.

It localises to the mitochondrion matrix. It catalyses the reaction N(2)-acetyl-L-ornithine + L-glutamate = N-acetyl-L-glutamate + L-ornithine. The catalysed reaction is L-glutamate + acetyl-CoA = N-acetyl-L-glutamate + CoA + H(+). Its pathway is amino-acid biosynthesis; L-arginine biosynthesis; L-ornithine and N-acetyl-L-glutamate from L-glutamate and N(2)-acetyl-L-ornithine (cyclic): step 1/1. The protein operates within amino-acid biosynthesis; L-arginine biosynthesis; N(2)-acetyl-L-ornithine from L-glutamate: step 1/4. Functionally, catalyzes two activities which are involved in the cyclic version of arginine biosynthesis: the synthesis of acetylglutamate from glutamate and acetyl-CoA, and of ornithine by transacetylation between acetylornithine and glutamate. In Pyricularia oryzae (strain 70-15 / ATCC MYA-4617 / FGSC 8958) (Rice blast fungus), this protein is Arginine biosynthesis bifunctional protein ArgJ, mitochondrial.